Reading from the N-terminus, the 2136-residue chain is U5 small nuclear ribonucleoprotein 200 kDa helicase (2136 aa).

A phosphoserine mark is found at Ser17 and Ser26. A disordered region spans residues 39–81 (EVLSLVGKLEGTRMGDKAQRTKPQMQEERRAKRRKRDEDRHDM). Lys46 is covalently cross-linked (Glycyl lysine isopeptide (Lys-Gly) (interchain with G-Cter in SUMO2)). The segment covering 48–81 (EGTRMGDKAQRTKPQMQEERRAKRRKRDEDRHDM) has biased composition (basic and acidic residues). Residues 54–84 (DKAQRTKPQMQEERRAKRRKRDEDRHDMNKM) are a coiled coil. Ser225 carries the phosphoserine modification. Thr389 is subject to Phosphothreonine. The interval 395 to 2129 (DLDQGGEALA…YKFSVDVKEA (1735 aa)) is interaction with C9orf78 and WBP4. In terms of domain architecture, Helicase ATP-binding 1 spans 490–673 (RAALETDENL…FLRVDPAKGL (184 aa)). 503-510 (APTGAGKT) contributes to the ATP binding site. The DEAH box signature appears at 615–618 (DEIH). Positions 684 to 921 (PLEQTYVGIT…NAKDAVNWLG (238 aa)) constitute a Helicase C-terminal 1 domain. Tyr709 is subject to Phosphotyrosine. Lys944 participates in a covalent cross-link: Glycyl lysine isopeptide (Lys-Gly) (interchain with G-Cter in SUMO). Position 971 is an N6-acetyllysine; alternate (Lys971). Lys971 is covalently cross-linked (Glycyl lysine isopeptide (Lys-Gly) (interchain with G-Cter in SUMO); alternate). Residues 982–1286 (TELGRIASHY…SCETQLPVSF (305 aa)) form the SEC63 1 domain. Residues Lys1071 and Lys1199 each participate in a glycyl lysine isopeptide (Lys-Gly) (interchain with G-Cter in SUMO) cross-link. An interaction with TSSC4 region spans residues 1282 to 2136 (LPVSFRHLIL…KEAETDSDSD (855 aa)). One can recognise a Helicase ATP-binding 2 domain in the interval 1337 to 1512 (NTVYNSDDNV…WLGCSATSTF (176 aa)). 1350–1357 (APTGSGKT) serves as a coordination point for ATP. Thr1428 bears the Phosphothreonine mark. The DEAH box signature appears at 1454–1457 (DEVH). The region spanning 1545–1753 (PVYHAITKHS…TIENKQDAVD (209 aa)) is the Helicase C-terminal 2 domain. The residue at position 1765 (Thr1765) is a Phosphothreonine. Residues 1812-2124 (PLNLGMIAAY…GCDQEYKFSV (313 aa)) form the SEC63 2 domain. A Phosphoserine modification is found at Ser2002. Lys2091 is covalently cross-linked (Glycyl lysine isopeptide (Lys-Gly) (interchain with G-Cter in SUMO)). Thr2131 bears the Phosphothreonine mark. A phosphoserine mark is found at Ser2133 and Ser2135.

Belongs to the helicase family. SKI2 subfamily. In terms of assembly, component of a core complex containing at least PRPF8, SNRNP200, EFTUD2 and SNRNP40. Component of the U5 snRNP and U4/U6-U5 tri-snRNP complexes, building blocks of the spliceosome. Component of the U4/U6-U5 tri-snRNP complex composed of the U4, U6 and U5 snRNAs and at least PRPF3, PRPF4, PRPF6, PRPF8, PRPF31, SNRNP200, TXNL4A, SNRNP40, DDX23, CD2BP2, PPIH, SNU13, EFTUD2, SART1 and USP39. Component of precatalytic, catalytic and postcatalytic spliceosomal complexes. Component of the minor spliceosome, which splices U12-type introns. Interacts with C9orf78; the interaction is direct and mutually exclusive with its interaction with WBP4. Interacts with WBP4; the interaction is mutually exclusive with its interaction with C9orf78. Interacts with PRPF8. Interacts with TSSC4; the interaction is direct, excludes recruitment of C9ORF78 and WBP4 to SNRNP200 and negatively regulates its RNA helicase activity.

The protein localises to the nucleus. The enzyme catalyses ATP + H2O = ADP + phosphate + H(+). Its function is as follows. Catalyzes the ATP-dependent unwinding of U4/U6 RNA duplices, an essential step in the assembly of a catalytically active spliceosome. Plays a role in pre-mRNA splicing as core component of precatalytic, catalytic and postcatalytic spliceosomal complexes. As a component of the minor spliceosome, involved in the splicing of U12-type introns in pre-mRNAs. Involved in spliceosome assembly, activation and disassembly. Mediates changes in the dynamic network of RNA-RNA interactions in the spliceosome. This chain is U5 small nuclear ribonucleoprotein 200 kDa helicase (Snrnp200), found in Mus musculus (Mouse).